The chain runs to 324 residues: Tetrachlorobenzoquinone reductase (324 aa).

One can recognise an FAD-binding FR-type domain in the interval 5–107 (VSTIDMTVTQ…VPPANNFALV (103 aa)). One can recognise a 2Fe-2S ferredoxin-type domain in the interval 238-324 (FTVVLARRSG…SKSPRLVLDI (87 aa)). [2Fe-2S] cluster contacts are provided by C273, C278, C281, and C311.

It belongs to the PDR/VanB family. In terms of assembly, homotrimer. FMN serves as cofactor. [2Fe-2S] cluster is required as a cofactor.

It carries out the reaction 2,3,5,6-tetrachlorohydroquinone + NAD(+) + H(+) = 2,3,5,6-tetrachloro-1,4-benzoquinone + NADH. It functions in the pathway xenobiotic degradation; pentachlorophenol degradation. With respect to regulation, in vitro, activated by tetrachlorohydroquinone (TCHQ) at low concentrations and inhibited at high concentrations (above 200 uM). However, PcpD would only be stimulated by tetrachlorohydroquinone (TCHQ) under in vivo conditions due to the toxicity of tetrachlorohydroquinone (TCHQ). Competitively inhibited by pentachlorophenol (PCP) in a concentration-dependent manner. PcpD is regulated by tetrachlorohydroquinone (TCHQ) and pentachlorophenol (PCP) using a mechanism, which maintains tetrachlorobenzoquinone at a level that would neither significantly decrease the biodegradation of pentachlorophenol (PCP) nor cause cytotoxicity in cells. In terms of biological role, involved in the degradation of the xenobiocide pentachlorophenol (PCP). Catalyzes the reduction of tetrachlorobenzoquinone (TCBQ) to yield tetrachlorohydroquinone (TCHQ). Also able to reduce 2,6-dichloroindophenol (DCIP). The polypeptide is Tetrachlorobenzoquinone reductase (Sphingobium chlorophenolicum).